Consider the following 279-residue polypeptide: Energy-coupling factor transporter ATP-binding protein EcfA (279 aa).

One can recognise an ABC transporter domain in the interval 5–240 (IELEKINYKY…GPELIDLGLD (236 aa)). An ATP-binding site is contributed by 40-47 (GHNGSGKS).

The protein belongs to the ABC transporter superfamily. Energy-coupling factor EcfA family. As to quaternary structure, forms a stable energy-coupling factor (ECF) transporter complex composed of 2 membrane-embedded substrate-binding proteins (S component), 2 ATP-binding proteins (A component) and 2 transmembrane proteins (T component).

It localises to the cell membrane. In terms of biological role, ATP-binding (A) component of a common energy-coupling factor (ECF) ABC-transporter complex. Unlike classic ABC transporters this ECF transporter provides the energy necessary to transport a number of different substrates. This is Energy-coupling factor transporter ATP-binding protein EcfA from Enterococcus faecium (Streptococcus faecium).